The sequence spans 199 residues: Crossover junction endodeoxyribonuclease RuvC (199 aa).

Residues Asp7, Glu68, and Asp141 contribute to the active site. 3 residues coordinate Mg(2+): Asp7, Glu68, and Asp141.

This sequence belongs to the RuvC family. As to quaternary structure, homodimer which binds Holliday junction (HJ) DNA. The HJ becomes 2-fold symmetrical on binding to RuvC with unstacked arms; it has a different conformation from HJ DNA in complex with RuvA. In the full resolvosome a probable DNA-RuvA(4)-RuvB(12)-RuvC(2) complex forms which resolves the HJ. The cofactor is Mg(2+).

It localises to the cytoplasm. The catalysed reaction is Endonucleolytic cleavage at a junction such as a reciprocal single-stranded crossover between two homologous DNA duplexes (Holliday junction).. Functionally, the RuvA-RuvB-RuvC complex processes Holliday junction (HJ) DNA during genetic recombination and DNA repair. Endonuclease that resolves HJ intermediates. Cleaves cruciform DNA by making single-stranded nicks across the HJ at symmetrical positions within the homologous arms, yielding a 5'-phosphate and a 3'-hydroxyl group; requires a central core of homology in the junction. The consensus cleavage sequence is 5'-(A/T)TT(C/G)-3'. Cleavage occurs on the 3'-side of the TT dinucleotide at the point of strand exchange. HJ branch migration catalyzed by RuvA-RuvB allows RuvC to scan DNA until it finds its consensus sequence, where it cleaves and resolves the cruciform DNA. This Saccharopolyspora erythraea (strain ATCC 11635 / DSM 40517 / JCM 4748 / NBRC 13426 / NCIMB 8594 / NRRL 2338) protein is Crossover junction endodeoxyribonuclease RuvC.